A 319-amino-acid chain; its full sequence is 4-diphosphocytidyl-2-C-methyl-D-erythritol kinase (319 aa).

Lys-21 is an active-site residue. Position 106 to 116 (106 to 116 (PIGAGLAGGSS)) interacts with ATP. Asp-148 is a catalytic residue.

The protein belongs to the GHMP kinase family. IspE subfamily.

It carries out the reaction 4-CDP-2-C-methyl-D-erythritol + ATP = 4-CDP-2-C-methyl-D-erythritol 2-phosphate + ADP + H(+). The protein operates within isoprenoid biosynthesis; isopentenyl diphosphate biosynthesis via DXP pathway; isopentenyl diphosphate from 1-deoxy-D-xylulose 5-phosphate: step 3/6. Catalyzes the phosphorylation of the position 2 hydroxy group of 4-diphosphocytidyl-2C-methyl-D-erythritol. This is 4-diphosphocytidyl-2-C-methyl-D-erythritol kinase from Prochlorococcus marinus (strain MIT 9313).